A 712-amino-acid polypeptide reads, in one-letter code: MFDTHTVEIEWAGRPLKLETGKIARQADGAVLATYGETVVLATVVSAKAPKPGQDFFPLTVNYQEKTYAAGKIPGGYFKREGRPSEKETLVSRLIDRPIRPLFPEGYKNDTQVVVTVVQHDLENDPDVLSMVAASAALTLSGVPFMGPVGGARVGYINGEYVLNPHLDEMDESSLDLVVAGTYDAVLMVESEAKELNEEVMLGAVMFGHKGFQPVLDAIIKLAEVAAKEPRDFQPEDYSELEAEMLKHFEAELREGYKITQKADRYAAVDAVKAKVKAHFFPEGVEPKYTAEVIGAVFKHLQAKIVRWNILDTKSRIDGRDLSTVRPIVSEVGLLPRTHGSALFTRGETQAIVVATLGTGEDEQYVDSLTGMYKERFLLHYNFPPYSVGETGRMGSPGRREIGHGKLAWRAIRPMLPTAEQFPYTLRVVSEITESNGSSSMATVCGTSLALMDAGVPLAKPVAGIAMGLILEGDRFAVLSDILGDEDHLGDMDFKVAGTADGITSLQMDIKIAGITEEIMKVALGQAQGGRAHILGEMAKAITESRGQLGEFAPRIEVMNIPVDKIREVIGSGGKVIREIVEKTGAKINIEDDGTVKIASSSGKEIEAARKWIHSIVAEPEIGQIYEGTVVKTADFGAFVNFFGARDGLVHISQLASERVAKTQDVVKEGDKVWVKLLGFDERGKVRLSMKVVDQATGQEIPNEKKKEEAAE.

The Mg(2+) site is built by aspartate 487 and aspartate 493. The region spanning 554–613 is the KH domain; sequence PRIEVMNIPVDKIREVIGSGGKVIREIVEKTGAKINIEDDGTVKIASSSGKEIEAARKWI. One can recognise an S1 motif domain in the interval 623 to 691; the sequence is GQIYEGTVVK…ERGKVRLSMK (69 aa).

Belongs to the polyribonucleotide nucleotidyltransferase family. Mg(2+) is required as a cofactor.

The protein resides in the cytoplasm. It catalyses the reaction RNA(n+1) + phosphate = RNA(n) + a ribonucleoside 5'-diphosphate. In terms of biological role, involved in mRNA degradation. Catalyzes the phosphorolysis of single-stranded polyribonucleotides processively in the 3'- to 5'-direction. The chain is Polyribonucleotide nucleotidyltransferase from Rhizobium leguminosarum bv. trifolii (strain WSM2304).